The primary structure comprises 1235 residues: ATP-dependent helicase/nuclease subunit A (1235 aa).

Residues 10-482 form the UvrD-like helicase ATP-binding domain; sequence SIWTDDQWSA…IDLNQNFRSR (473 aa). ATP is bound at residue 31-38; sequence AAAGSGKT. The 291-residue stretch at 509 to 799 folds into the UvrD-like helicase C-terminal domain; sequence QAALKLGASY…RLMTIHSSKG (291 aa).

This sequence belongs to the helicase family. AddA subfamily. Heterodimer of AddA and AddB/RexB. Requires Mg(2+) as cofactor.

It catalyses the reaction Couples ATP hydrolysis with the unwinding of duplex DNA by translocating in the 3'-5' direction.. The catalysed reaction is ATP + H2O = ADP + phosphate + H(+). Its function is as follows. The heterodimer acts as both an ATP-dependent DNA helicase and an ATP-dependent, dual-direction single-stranded exonuclease. Recognizes the chi site generating a DNA molecule suitable for the initiation of homologous recombination. The AddA nuclease domain is required for chi fragment generation; this subunit has the helicase and 3' -&gt; 5' nuclease activities. This is ATP-dependent helicase/nuclease subunit A from Bacillus velezensis (strain DSM 23117 / BGSC 10A6 / LMG 26770 / FZB42) (Bacillus amyloliquefaciens subsp. plantarum).